Here is a 399-residue protein sequence, read N- to C-terminus: Sex hormone-binding globulin (399 aa).

An N-terminal signal peptide occupies residues 1-29 (MENRDSVASLLLLLLLLPPPHTHQGQVLR). Laminin G-like domains follow at residues 43 to 214 (RYLS…LGNC) and 221 to 387 (GLFF…THSC). Asn160 carries an N-linked (GlcNAc...) asparagine glycan. A disulfide bond links Cys191 and Cys214. Asn270, Asn353, Asn377, and Asn393 each carry an N-linked (GlcNAc...) asparagine glycan. Cys359 and Cys387 are disulfide-bonded.

As to quaternary structure, homodimer. In terms of processing, differentially glycosylated in liver (SHBG) and testis (ABP).

It localises to the secreted. Functions as an androgen transport protein, but may also be involved in receptor mediated processes. Each dimer binds one molecule of steroid. Specific for 5-alpha-dihydrotestosterone, testosterone, and 17-beta-estradiol. Regulates the plasma metabolic clearance rate of steroid hormones by controlling their plasma concentration. The polypeptide is Sex hormone-binding globulin (SHBG) (Phodopus sungorus (Striped hairy-footed hamster)).